The chain runs to 436 residues: ATP-dependent protease ATPase subunit HslU (436 aa).

ATP contacts are provided by residues Ile-18, 60-65 (GVGKTE), Asp-249, Glu-314, and Arg-386.

It belongs to the ClpX chaperone family. HslU subfamily. In terms of assembly, a double ring-shaped homohexamer of HslV is capped on each side by a ring-shaped HslU homohexamer. The assembly of the HslU/HslV complex is dependent on binding of ATP.

Its subcellular location is the cytoplasm. Functionally, ATPase subunit of a proteasome-like degradation complex; this subunit has chaperone activity. The binding of ATP and its subsequent hydrolysis by HslU are essential for unfolding of protein substrates subsequently hydrolyzed by HslV. HslU recognizes the N-terminal part of its protein substrates and unfolds these before they are guided to HslV for hydrolysis. This is ATP-dependent protease ATPase subunit HslU from Ruegeria sp. (strain TM1040) (Silicibacter sp.).